We begin with the raw amino-acid sequence, 155 residues long: Glutaredoxin-related protein 5, mitochondrial (155 aa).

The N-terminal 14 residues, 1–14, are a transit peptide targeting the mitochondrion; it reads MNSVFRSTARCLRS. In terms of domain architecture, Glutaredoxin spans 42–145; the sequence is QKNLEEMVKK…EELQKLGIRS (104 aa). Lys-59 contributes to the glutathione binding site. Cys-67 contributes to the [2Fe-2S] cluster binding site. Residues 97–101, Ile-109, and 122–123 contribute to the glutathione site; these read RQGIK and CD.

Homodimer.

It localises to the mitochondrion. Functionally, monothiol glutaredoxin involved in mitochondrial iron-sulfur (Fe/S) cluster transfer. Receives iron-sulfur clusters from scaffold protein ISCU and mediates their transfer to apoproteins, to the 4Fe/FS cluster biosynthesis machinery, or export from mitochondrion. Required for normal hemoglobin biosynthesis. The sequence is that of Glutaredoxin-related protein 5, mitochondrial (glrx5) from Danio rerio (Zebrafish).